Reading from the N-terminus, the 683-residue chain is Methionine--tRNA ligase (683 aa).

The short motif at 15-25 (PYANGPIHLGH) is the 'HIGH' region element. Residues Cys-146, Cys-149, Cys-159, and Cys-162 each coordinate Zn(2+). The 'KMSKS' region signature appears at 332–336 (KMSKS). An ATP-binding site is contributed by Lys-335. The tRNA-binding domain maps to 582–683 (DFAKIDLRIA…EGALPGMRVK (102 aa)).

The protein belongs to the class-I aminoacyl-tRNA synthetase family. MetG type 1 subfamily. In terms of assembly, homodimer. Zn(2+) is required as a cofactor.

The protein localises to the cytoplasm. It carries out the reaction tRNA(Met) + L-methionine + ATP = L-methionyl-tRNA(Met) + AMP + diphosphate. Is required not only for elongation of protein synthesis but also for the initiation of all mRNA translation through initiator tRNA(fMet) aminoacylation. The sequence is that of Methionine--tRNA ligase from Shewanella frigidimarina (strain NCIMB 400).